The following is a 358-amino-acid chain: Aminomethyltransferase (358 aa).

This sequence belongs to the GcvT family. In terms of assembly, the glycine cleavage system is composed of four proteins: P, T, L and H.

The catalysed reaction is N(6)-[(R)-S(8)-aminomethyldihydrolipoyl]-L-lysyl-[protein] + (6S)-5,6,7,8-tetrahydrofolate = N(6)-[(R)-dihydrolipoyl]-L-lysyl-[protein] + (6R)-5,10-methylene-5,6,7,8-tetrahydrofolate + NH4(+). In terms of biological role, the glycine cleavage system catalyzes the degradation of glycine. The chain is Aminomethyltransferase from Francisella tularensis subsp. tularensis (strain WY96-3418).